Reading from the N-terminus, the 753-residue chain is Rho guanine nucleotide exchange factor gef1 (753 aa).

3 disordered regions span residues 52–150 (SNSY…DRNR), 175–194 (TLRKIHTNTSSNGTSRRVSG), and 200–245 (AQNS…ASLL). 4 stretches are compositionally biased toward polar residues: residues 94–105 (DPQTPNTPPVSS), 114–141 (GSFNLPNSNMSHSLNGDSTASNSSTLTP), 181–191 (TNTSSNGTSRR), and 200–220 (AQNSSETSSNRTSAYLPGSST). Positions 230–245 (TLASMPSSHSSTASLL) are enriched in low complexity. The 197-residue stretch at 311-507 (KRANLIKELV…QELISGINQK (197 aa)) folds into the DH domain.

In terms of assembly, interacts with cdc42.

The protein resides in the cytoplasm. Its function is as follows. Has a role in the control of cell polarity and cytokinesis. Involved in bipolar growth, via modulation of cdc42-shk1-orb6 signaling, and septum formation. Stimulates guanine nucleotide exchange of cdc42. This Schizosaccharomyces pombe (strain 972 / ATCC 24843) (Fission yeast) protein is Rho guanine nucleotide exchange factor gef1 (gef1).